We begin with the raw amino-acid sequence, 341 residues long: Ribulose-5-phosphate reductase (341 aa).

Residues C38, H64, E65, and E144 each coordinate Zn(2+).

This sequence belongs to the zinc-containing alcohol dehydrogenase family. Requires Zn(2+) as cofactor.

It carries out the reaction D-ribitol 5-phosphate + NADP(+) = D-ribulose 5-phosphate + NADPH + H(+). It participates in cell wall biogenesis; poly(ribitol phosphate) teichoic acid biosynthesis. In terms of biological role, catalyzes the NADPH dependent reduction of D-ribulose 5-phosphate to D-ribitol 5-phosphate. The chain is Ribulose-5-phosphate reductase from Bacillus spizizenii (strain ATCC 23059 / NRRL B-14472 / W23) (Bacillus subtilis subsp. spizizenii).